The sequence spans 232 residues: tRNA (guanine-N(1)-)-methyltransferase (232 aa).

G116 provides a ligand contact to S-adenosyl-L-methionine.

Belongs to the RNA methyltransferase TrmD family. Homodimer.

It is found in the cytoplasm. It catalyses the reaction guanosine(37) in tRNA + S-adenosyl-L-methionine = N(1)-methylguanosine(37) in tRNA + S-adenosyl-L-homocysteine + H(+). Its function is as follows. Specifically methylates guanosine-37 in various tRNAs. This chain is tRNA (guanine-N(1)-)-methyltransferase, found in Chlorobium luteolum (strain DSM 273 / BCRC 81028 / 2530) (Pelodictyon luteolum).